A 338-amino-acid chain; its full sequence is tRNA N6-adenosine threonylcarbamoyltransferase (338 aa).

The Fe cation site is built by His110 and His114. Residues 132–136, Asp165, Gly178, and Asn274 contribute to the substrate site; that span reads LLSGG. Asp298 is a binding site for Fe cation.

It belongs to the KAE1 / TsaD family. It depends on Fe(2+) as a cofactor.

It localises to the cytoplasm. It catalyses the reaction L-threonylcarbamoyladenylate + adenosine(37) in tRNA = N(6)-L-threonylcarbamoyladenosine(37) in tRNA + AMP + H(+). In terms of biological role, required for the formation of a threonylcarbamoyl group on adenosine at position 37 (t(6)A37) in tRNAs that read codons beginning with adenine. Is involved in the transfer of the threonylcarbamoyl moiety of threonylcarbamoyl-AMP (TC-AMP) to the N6 group of A37, together with TsaE and TsaB. TsaD likely plays a direct catalytic role in this reaction. This chain is tRNA N6-adenosine threonylcarbamoyltransferase, found in Borrelia garinii subsp. bavariensis (strain ATCC BAA-2496 / DSM 23469 / PBi) (Borreliella bavariensis).